The sequence spans 330 residues: MALKASPVTGLFPPLRPTASSSPSTSSNRPCSLRILPLRTSFFGNSSGALRVNVLRLACDNRLRCNGHGATMNLFERFSRVVKSYANALISSFEDPEKILEQTVIEMNSDLTKMRQATAQVLASQKQLQNKYKAAQQSSDDWYKRAQLALAKGDEDLAREALKRRKSFADNATALKTQLDQQKGVVDNLVSNTRLLESKIQEAKAKKDTLLARARTAKTATKVQEMIGTVNTSGALSAFEKMEEKVMAMESEADALTQIGTDELEGKFQMLETSSVDDDLADLKKELSGSSKKGELPPGRSTVAASTRYPFKDSEIENELNELRRKANDF.

Residues 1–64 (MALKASPVTG…LRLACDNRLR (64 aa)) constitute a chloroplast transit peptide. 2 coiled-coil regions span residues 124–259 (SQKQ…LTQI) and 312–329 (KDSE…KAND). The segment at 287–312 (LSGSSKKGELPPGRSTVAASTRYPFK) is disordered.

This sequence belongs to the PspA/Vipp/IM30 family. Homomultimer. Complex formation involves interaction via the central alpha-helical domain (71-286).

It localises to the plastid. It is found in the chloroplast inner membrane. The protein resides in the chloroplast thylakoid membrane. Its function is as follows. Required for plastid vesicle formation and thylakoid membrane biogenesis, but not for functional assembly of thylakoid protein complexes. In Arabidopsis thaliana (Mouse-ear cress), this protein is Membrane-associated protein VIPP1, chloroplastic.